The primary structure comprises 219 residues: MGQKVNPIGLRLGIVKTWDSRWYAEKGKYAEFIREDFKLRKFLKKKLHHAGISKIEIERSGRRVRLRVFAARPGIVIGKKGSEIEQLKKELEKMVDNEVLIDIQEVRKPELDAQLVAENVAMQLERRVAFRRAMKRGISSAMRFGAQGVKIMAAGRLGGAEMARREWYREGRMPLHTLRADIDYGYTEANTTYGVIGVKVFIFKGEILKSDTEAANPTA.

Residues 39–107 (LRKFLKKKLH…EVLIDIQEVR (69 aa)) enclose the KH type-2 domain.

It belongs to the universal ribosomal protein uS3 family. As to quaternary structure, part of the 30S ribosomal subunit. Forms a tight complex with proteins S10 and S14.

Binds the lower part of the 30S subunit head. Binds mRNA in the 70S ribosome, positioning it for translation. The protein is Small ribosomal subunit protein uS3 of Desulfatibacillum aliphaticivorans.